Consider the following 249-residue polypeptide: MKTGILLTLCYDGSNYHGWINQTNSISTQTVLNKAIKKVIKTSEFKTIGASKTDANVHALDQKVLLIIYFTPILEKFINAINKALPEDIRILNAKFVDPNFNIREVDYKIYNYYINDHKFDIFTNRYEYFWKHSKIDILKLQEIFNLFIGEHEFKLFSGLKENEWDNYQTKRIIDDIKVLRINNKVVIQFKATGFIRYQIRIIIANCLNAYLNYKVNINTLTEMLQGIGKKTPFIIKAKGLVLQEIKFK.

Residue Asp-54 is the Nucleophile of the active site. Tyr-111 is a substrate binding site.

The protein belongs to the tRNA pseudouridine synthase TruA family. Homodimer.

The enzyme catalyses uridine(38/39/40) in tRNA = pseudouridine(38/39/40) in tRNA. Its function is as follows. Formation of pseudouridine at positions 38, 39 and 40 in the anticodon stem and loop of transfer RNAs. In Mycoplasma capricolum subsp. capricolum (strain California kid / ATCC 27343 / NCTC 10154), this protein is tRNA pseudouridine synthase A.